The chain runs to 210 residues: NAD(P)H-quinone oxidoreductase subunit I (210 aa).

4Fe-4S ferredoxin-type domains are found at residues 55-84 (GRIH…VDWV) and 95-124 (RNYS…MTEE). Residues C64, C67, C70, C74, C104, C107, C110, and C114 each contribute to the [4Fe-4S] cluster site.

This sequence belongs to the complex I 23 kDa subunit family. NDH-1 is composed of at least 11 different subunits. The cofactor is [4Fe-4S] cluster.

The protein resides in the cellular thylakoid membrane. It catalyses the reaction a plastoquinone + NADH + (n+1) H(+)(in) = a plastoquinol + NAD(+) + n H(+)(out). The catalysed reaction is a plastoquinone + NADPH + (n+1) H(+)(in) = a plastoquinol + NADP(+) + n H(+)(out). NDH-1 shuttles electrons from an unknown electron donor, via FMN and iron-sulfur (Fe-S) centers, to quinones in the respiratory and/or the photosynthetic chain. The immediate electron acceptor for the enzyme in this species is believed to be plastoquinone. Couples the redox reaction to proton translocation, and thus conserves the redox energy in a proton gradient. This is NAD(P)H-quinone oxidoreductase subunit I from Synechococcus sp. (strain CC9902).